Consider the following 149-residue polypeptide: Large ribosomal subunit protein bL9 (149 aa).

The protein belongs to the bacterial ribosomal protein bL9 family.

Functionally, binds to the 23S rRNA. The sequence is that of Large ribosomal subunit protein bL9 from Haemophilus ducreyi (strain 35000HP / ATCC 700724).